A 269-amino-acid chain; its full sequence is uncharacterized protein (269 aa).

Belongs to the methyltransferase superfamily.

This is an uncharacterized protein from Mycobacterium leprae (strain Br4923).